We begin with the raw amino-acid sequence, 139 residues long: UPF0225 protein Bpro_4182 (139 aa).

It belongs to the UPF0225 family.

The protein is UPF0225 protein Bpro_4182 of Polaromonas sp. (strain JS666 / ATCC BAA-500).